The following is a 48-amino-acid chain: DNA-directed RNA polymerase subunit Rpo12 (48 aa).

Cys9, Cys26, and Cys29 together coordinate Zn(2+).

Belongs to the archaeal Rpo12/eukaryotic RPC10 RNA polymerase subunit family. In terms of assembly, part of the RNA polymerase complex. Zn(2+) serves as cofactor.

It localises to the cytoplasm. The enzyme catalyses RNA(n) + a ribonucleoside 5'-triphosphate = RNA(n+1) + diphosphate. DNA-dependent RNA polymerase (RNAP) catalyzes the transcription of DNA into RNA using the four ribonucleoside triphosphates as substrates. This is DNA-directed RNA polymerase subunit Rpo12 from Sulfurisphaera tokodaii (strain DSM 16993 / JCM 10545 / NBRC 100140 / 7) (Sulfolobus tokodaii).